We begin with the raw amino-acid sequence, 146 residues long: Protein archease (146 aa).

Positions 16, 145, and 146 each coordinate Ca(2+).

The protein belongs to the archease family.

Functionally, activates the tRNA-splicing ligase complex by facilitating the enzymatic turnover of catalytic subunit RtcB. Acts by promoting the guanylylation of RtcB, a key intermediate step in tRNA ligation. Can also alter the NTP specificity of RtcB such that ATP, dGTP or ITP is used efficiently. This Methanosarcina barkeri (strain Fusaro / DSM 804) protein is Protein archease.